The sequence spans 639 residues: Chaperone protein DnaK (639 aa).

Position 198 is a phosphothreonine; by autocatalysis (T198). Residues 597–639 (AYSAGQSAEGAPHAAGAEASAQSRTDDGVVDADFEEVDEKKGH) are disordered. Positions 603–617 (SAEGAPHAAGAEASA) are enriched in low complexity. Positions 624–633 (GVVDADFEEV) are enriched in acidic residues.

Belongs to the heat shock protein 70 family.

Its function is as follows. Acts as a chaperone. The polypeptide is Chaperone protein DnaK (Rhodospirillum rubrum (strain ATCC 11170 / ATH 1.1.1 / DSM 467 / LMG 4362 / NCIMB 8255 / S1)).